Here is an 821-residue protein sequence, read N- to C-terminus: Leucine--tRNA ligase (821 aa).

Positions 44–54 match the 'HIGH' region motif; that stretch reads PYPSGRIHMGH. Residues 589-593 carry the 'KMSKS' region motif; sequence KMSKS. Lysine 592 is a binding site for ATP.

This sequence belongs to the class-I aminoacyl-tRNA synthetase family.

It localises to the cytoplasm. The enzyme catalyses tRNA(Leu) + L-leucine + ATP = L-leucyl-tRNA(Leu) + AMP + diphosphate. The chain is Leucine--tRNA ligase from Campylobacter curvus (strain 525.92).